The primary structure comprises 256 residues: 1-(5-phosphoribosyl)-5-[(5-phosphoribosylamino)methylideneamino] imidazole-4-carboxamide isomerase (256 aa).

Asp-8 serves as the catalytic Proton acceptor. The active-site Proton donor is Asp-130.

It belongs to the HisA/HisF family.

The protein localises to the cytoplasm. The enzyme catalyses 1-(5-phospho-beta-D-ribosyl)-5-[(5-phospho-beta-D-ribosylamino)methylideneamino]imidazole-4-carboxamide = 5-[(5-phospho-1-deoxy-D-ribulos-1-ylimino)methylamino]-1-(5-phospho-beta-D-ribosyl)imidazole-4-carboxamide. Its pathway is amino-acid biosynthesis; L-histidine biosynthesis; L-histidine from 5-phospho-alpha-D-ribose 1-diphosphate: step 4/9. The polypeptide is 1-(5-phosphoribosyl)-5-[(5-phosphoribosylamino)methylideneamino] imidazole-4-carboxamide isomerase (Chlorobium phaeobacteroides (strain DSM 266 / SMG 266 / 2430)).